The following is a 66-amino-acid chain: Small ribosomal subunit protein bS21 (66 aa).

Belongs to the bacterial ribosomal protein bS21 family.

The polypeptide is Small ribosomal subunit protein bS21 (Rickettsia typhi (strain ATCC VR-144 / Wilmington)).